The chain runs to 258 residues: Deoxyribose-phosphate aldolase (258 aa).

Catalysis depends on Asp102, which acts as the Proton donor/acceptor. Residue Lys165 is the Schiff-base intermediate with acetaldehyde of the active site. The Proton donor/acceptor role is filled by Lys199.

It belongs to the DeoC/FbaB aldolase family. DeoC type 2 subfamily.

It localises to the cytoplasm. It carries out the reaction 2-deoxy-D-ribose 5-phosphate = D-glyceraldehyde 3-phosphate + acetaldehyde. It functions in the pathway carbohydrate degradation; 2-deoxy-D-ribose 1-phosphate degradation; D-glyceraldehyde 3-phosphate and acetaldehyde from 2-deoxy-alpha-D-ribose 1-phosphate: step 2/2. Functionally, catalyzes a reversible aldol reaction between acetaldehyde and D-glyceraldehyde 3-phosphate to generate 2-deoxy-D-ribose 5-phosphate. This Vibrio parahaemolyticus serotype O3:K6 (strain RIMD 2210633) protein is Deoxyribose-phosphate aldolase.